The sequence spans 148 residues: L-alanine exporter AlaE (148 aa).

A run of 4 helical transmembrane segments spans residues 18–38, 49–69, 88–108, and 115–135; these read FALVVYCFVIGMIIEIVISGM, VSIPVNILIAWPYGLYRDAFI, LLAYVSFQSPVYALILWSVGA, and TAVASNALVSMAMGVAYGYFL.

This sequence belongs to the AlaE exporter family.

The protein resides in the cell inner membrane. Functionally, exports L-alanine. In Yersinia enterocolitica subsp. palearctica serotype O:3 (strain DSM 13030 / CIP 106945 / Y11), this protein is L-alanine exporter AlaE.